A 197-amino-acid chain; its full sequence is MSDIFVYPCAGRIAGVDEVGRGPLVGAVVTAAVILDPARPIAGLADSKKLSEKRRNALYDEIVEKALCWSLGRAEAEEIDRLNILQATMVAMQRAVAGLARQPDFVLIDGNRCPALPMAAQAVVKGDSRVAEISAASILAKVTRDREMAALDRQYPEYGFARHKGYPTALHLERLAALGATEHHRRSFGPVKRVLGL.

The RNase H type-2 domain maps to glycine 11–leucine 197. A divalent metal cation is bound by residues aspartate 17, glutamate 18, and aspartate 109.

The protein belongs to the RNase HII family. It depends on Mn(2+) as a cofactor. The cofactor is Mg(2+).

The protein resides in the cytoplasm. It carries out the reaction Endonucleolytic cleavage to 5'-phosphomonoester.. In terms of biological role, endonuclease that specifically degrades the RNA of RNA-DNA hybrids. This is Ribonuclease HII from Edwardsiella ictaluri (strain 93-146).